A 341-amino-acid chain; its full sequence is S-adenosylmethionine:tRNA ribosyltransferase-isomerase (341 aa).

It belongs to the QueA family. In terms of assembly, monomer.

It localises to the cytoplasm. It catalyses the reaction 7-aminomethyl-7-carbaguanosine(34) in tRNA + S-adenosyl-L-methionine = epoxyqueuosine(34) in tRNA + adenine + L-methionine + 2 H(+). The protein operates within tRNA modification; tRNA-queuosine biosynthesis. In terms of biological role, transfers and isomerizes the ribose moiety from AdoMet to the 7-aminomethyl group of 7-deazaguanine (preQ1-tRNA) to give epoxyqueuosine (oQ-tRNA). In Symbiobacterium thermophilum (strain DSM 24528 / JCM 14929 / IAM 14863 / T), this protein is S-adenosylmethionine:tRNA ribosyltransferase-isomerase.